The primary structure comprises 561 residues: DNA ligase B (561 aa).

Lys-125 functions as the N6-AMP-lysine intermediate in the catalytic mechanism.

It belongs to the NAD-dependent DNA ligase family. LigB subfamily.

It catalyses the reaction NAD(+) + (deoxyribonucleotide)n-3'-hydroxyl + 5'-phospho-(deoxyribonucleotide)m = (deoxyribonucleotide)n+m + AMP + beta-nicotinamide D-nucleotide.. Functionally, catalyzes the formation of phosphodiester linkages between 5'-phosphoryl and 3'-hydroxyl groups in double-stranded DNA using NAD as a coenzyme and as the energy source for the reaction. The sequence is that of DNA ligase B from Salmonella paratyphi B (strain ATCC BAA-1250 / SPB7).